The following is a 292-amino-acid chain: Protein-L-isoaspartate O-methyltransferase (292 aa).

The segment at 1-76 (MTEKKRFPLS…AAAPSSNERA (76 aa)) is disordered. Residues 28–48 (NRSSTSGKVATPQTATQNASQ) show a composition bias toward polar residues. Residue serine 138 is part of the active site.

It belongs to the methyltransferase superfamily. L-isoaspartyl/D-aspartyl protein methyltransferase family.

Its subcellular location is the cytoplasm. The catalysed reaction is [protein]-L-isoaspartate + S-adenosyl-L-methionine = [protein]-L-isoaspartate alpha-methyl ester + S-adenosyl-L-homocysteine. In terms of biological role, catalyzes the methyl esterification of L-isoaspartyl residues in peptides and proteins that result from spontaneous decomposition of normal L-aspartyl and L-asparaginyl residues. It plays a role in the repair and/or degradation of damaged proteins. The chain is Protein-L-isoaspartate O-methyltransferase from Janthinobacterium sp. (strain Marseille) (Minibacterium massiliensis).